We begin with the raw amino-acid sequence, 329 residues long: MIQLKDMVMKLSGTSRHHGQQRRGGSPPPRGRTTSVYRSGYYRPGMVQDDMAVPPATYLGGGGTSMSSASSTPAWDFARPAEGEAREWVAQVEPGVQITFVSLAGGGGNDLKRIRFSREMYDKWQAQKWWGENNERIMELYNVRRFSRQVLPTPPRSDDGERESFYSQVGSTRGSPAATPSPAPLTPDRVTSWSAFVRPPSASRQQQQHSFRPLSPPPPSSSNPSERAWQQQQQPQRAGKSPAAASDAMDAARTTSCSSRDEVSISNASELEVTEWVIQDEPGVYITVRELADGTRELRRVRFSRERFAELNAKLWWEENKERIQAQYL.

Positions 12–37 are disordered; sequence SGTSRHHGQQRRGGSPPPRGRTTSVY. The region spanning 86 to 142 is the BRX 1 domain; it reads REWVAQVEPGVQITFVSLAGGGGNDLKRIRFSREMYDKWQAQKWWGENNERIMELYN. The segment at 151–263 is disordered; it reads LPTPPRSDDG…TTSCSSRDEV (113 aa). Low complexity-rich tracts occupy residues 222–236 and 243–252; these read SNPS…QQPQ and AAASDAMDAA. Positions 253–263 are enriched in polar residues; that stretch reads RTTSCSSRDEV. In terms of domain architecture, BRX 2 spans 274–329; that stretch reads TEWVIQDEPGVYITVRELADGTRELRRVRFSRERFAELNAKLWWEENKERIQAQYL.

The protein belongs to the BRX family.

The protein resides in the nucleus. This chain is Protein Brevis radix-like 4 (BRXL4), found in Oryza sativa subsp. japonica (Rice).